Here is a 788-residue protein sequence, read N- to C-terminus: MEKTNRKKLFDEDIDYVNEDHISSFAKALAWEEQYEILENEKSGASSDKESQDAATIQKETEELDDLGADELSTALNGMHKPDLISSKSDWWPINTSKSIPKTKIRKKSKKSSVNEGHSKITNEFRSSASYTMLRWPILIFISCWISLLCFMYIIVRAYVALSEYFLTWVGKRKELRNKLRASQNYEEWVQNALELDRFLNLDKWSENPKFSYYDSKTVELTISKLASLREEGRDNDLMVILQGCIKKNFAGIENRQLYSHRYYGTKYLVEKYIDEVIVCIDKVIESQQISFNDKRRFFRTVSKNYGKTALCLSGGACFTYTHFGIVKALLDNDLLPSIISGTSGGGLIAALSCTRTDDELKKLLVPELARKITACEDPWYVWIPRWWRTGARFDSLEWARKANFFTRGSTTFYESFKRTGRRLNISTVPSNPHSPVILCNNITSPNCIIWSSLLASSAVPGILNPVVLLMKDLKTDRVVPFSLGSKWRDGSLRTDIPIDALNTYYNVNFSIVSQVNPHISLFFFAPKGTVGRPVAIPRRKTHKEKYASLRGGFIATALEQLFKLEITKWLQMIKSLDLLPHLLEQDWSNIWLQRFSGSITIWPRNRLKDFWYILSDPTEERLAEMLSKGERAMFPRILFVKHRLSIEKAIEKGRKQTKLSANFNTLTSSDSGRTELSPEAAELQVEPAMFDDDEYDSDSSDDEVLSPNNKKHIDKFGTPNTEDGDDDEDAYEYYDDDDYGLSTEDEANQENTGNSQGEENDTGSRFLKSFFRAGSRDSKLHRRNTVF.

Residues 136–156 form a helical membrane-spanning segment; that stretch reads WPILIFISCWISLLCFMYIIV. A PNPLA domain is found at 311-503; the sequence is LCLSGGACFT…RTDIPIDALN (193 aa). The GXSXG signature appears at 342–346; sequence GTSGG. Ser344 serves as the catalytic Nucleophile. The Proton acceptor role is filled by Asp490. Residues 662–672 are compositionally biased toward polar residues; the sequence is ANFNTLTSSDS. The interval 662–771 is disordered; it reads ANFNTLTSSD…DTGSRFLKSF (110 aa). 2 stretches are compositionally biased toward acidic residues: residues 690–705 and 723–749; these read MFDDDEYDSDSSDDEV and EDGDDDEDAYEYYDDDDYGLSTEDEAN.

Belongs to the PLPL family.

The protein resides in the membrane. Probable lipid hydrolase. The protein is Patatin-like phospholipase domain-containing protein DEHA2B04136g of Debaryomyces hansenii (strain ATCC 36239 / CBS 767 / BCRC 21394 / JCM 1990 / NBRC 0083 / IGC 2968) (Yeast).